We begin with the raw amino-acid sequence, 93 residues long: Small ribosomal subunit protein uS19 (93 aa).

Belongs to the universal ribosomal protein uS19 family.

Protein S19 forms a complex with S13 that binds strongly to the 16S ribosomal RNA. This chain is Small ribosomal subunit protein uS19, found in Paenarthrobacter aurescens (strain TC1).